The primary structure comprises 247 residues: Membrane-embedded CAAX protease MroQ (247 aa).

Residues M1 to S17 form the signal peptide. Transmembrane regions (helical) follow at residues V42–L62, I81–I101, and L119–L139. Residue E141 is part of the active site. Helical transmembrane passes span I162–D182 and F183–T203.

It belongs to the peptidase U48 family.

It localises to the membrane. Its function is as follows. Participates in the regulation of the Agr quorum sensing activity and plays thereby an important role in virulence. Mechanistically, elicits a protease dependent control of Agr activity without playing a role in the processing of the pheromone-precursor AgrD. The protein is Membrane-embedded CAAX protease MroQ (mroQ) of Staphylococcus aureus (strain USA300).